Here is a 291-residue protein sequence, read N- to C-terminus: ATP synthase gamma chain (291 aa).

It belongs to the ATPase gamma chain family. As to quaternary structure, F-type ATPases have 2 components, CF(1) - the catalytic core - and CF(0) - the membrane proton channel. CF(1) has five subunits: alpha(3), beta(3), gamma(1), delta(1), epsilon(1). CF(0) has three main subunits: a, b and c.

Its subcellular location is the cell membrane. In terms of biological role, produces ATP from ADP in the presence of a proton gradient across the membrane. The gamma chain is believed to be important in regulating ATPase activity and the flow of protons through the CF(0) complex. The protein is ATP synthase gamma chain of Streptococcus pyogenes serotype M1.